Reading from the N-terminus, the 345-residue chain is tRNA N6-adenosine threonylcarbamoyltransferase (345 aa).

2 residues coordinate Fe cation: H111 and H115. Residues 136–140 (LVSGG), D169, G182, and N279 contribute to the substrate site. D307 contributes to the Fe cation binding site.

It belongs to the KAE1 / TsaD family. Fe(2+) is required as a cofactor.

The protein localises to the cytoplasm. The catalysed reaction is L-threonylcarbamoyladenylate + adenosine(37) in tRNA = N(6)-L-threonylcarbamoyladenosine(37) in tRNA + AMP + H(+). Its function is as follows. Required for the formation of a threonylcarbamoyl group on adenosine at position 37 (t(6)A37) in tRNAs that read codons beginning with adenine. Is involved in the transfer of the threonylcarbamoyl moiety of threonylcarbamoyl-AMP (TC-AMP) to the N6 group of A37, together with TsaE and TsaB. TsaD likely plays a direct catalytic role in this reaction. The polypeptide is tRNA N6-adenosine threonylcarbamoyltransferase (Actinobacillus succinogenes (strain ATCC 55618 / DSM 22257 / CCUG 43843 / 130Z)).